The following is a 218-amino-acid chain: MSEHHNGTEASLSSEQRARAEMVKLGASFFQRGYATGSAGNLSLLLDDGTLLATPTGSCLGELDAERLSKVSLSGEWISGDKPSKEVSFHLSIYRNDPECKAIVHLHSTYLTALSCLEGLDTQDAIKPFTPYVVMRVGKVPVVPYYRPGDARLGEDLAKLASRYKAFLLANHGPVVTGKNLRAAADNMEELEETAKLIFILGDRKIRYLTADDIAELS.

The Proton acceptor role is filled by E86. Zn(2+) contacts are provided by E86, H105, and H107. Y132 serves as the catalytic Proton donor. H172 contributes to the Zn(2+) binding site.

It belongs to the aldolase class II family. AraD/FucA subfamily. The cofactor is Zn(2+).

The enzyme catalyses 3-dehydro-4-O-phospho-D-erythronate + H(+) = dihydroxyacetone phosphate + CO2. It carries out the reaction 3-dehydro-4-O-phospho-L-erythronate + H(+) = dihydroxyacetone phosphate + CO2. In terms of biological role, catalyzes the decarboxylation of 3-oxo-tetronate 4-phosphate to dihydroxyacetone phosphate (DHAP) and CO(2). This Pectobacterium atrosepticum (strain SCRI 1043 / ATCC BAA-672) (Erwinia carotovora subsp. atroseptica) protein is 3-oxo-tetronate 4-phosphate decarboxylase.